The following is a 974-amino-acid chain: Ephrin type-B receptor 3 (974 aa).

Residues 1–16 (MLPAVFVILALSAVQG) form the signal peptide. Over 17–534 (LEETLMDTKW…RSSLQEQVPM (518 aa)) the chain is Extracellular. One can recognise an Eph LBD domain in the interval 18-196 (EETLMDTKWT…FFKKCPRTTA (179 aa)). A disulfide bridge links Cys-60 with Cys-178. Fibronectin type-III domains follow at residues 318–426 (VPSA…TNQA) and 427–522 (APSS…IAED). N-linked (GlcNAc...) asparagine glycans are attached at residues Asn-330 and Asn-420. A helical membrane pass occupies residues 535 to 555 (VVGSVTAGLIFIIAVVIIVIV). Residues 556–974 (CFSRKQRNDS…QMSQTLPVQV (419 aa)) lie on the Cytoplasmic side of the membrane. Tyr-590 is subject to Phosphotyrosine; by autocatalysis. The 264-residue stretch at 609–872 (VKIEEVIGAG…QIVSSLDKLI (264 aa)) folds into the Protein kinase domain. ATP contacts are provided by residues 615-623 (IGAGEFGEV) and Lys-641. The active-site Proton acceptor is Asp-734. Positions 901–965 (TTFPTVSDWL…LNSVQDMRLQ (65 aa)) constitute an SAM domain. Residues 972 to 974 (VQV) carry the PDZ-binding motif.

It belongs to the protein kinase superfamily. Tyr protein kinase family. Ephrin receptor subfamily. Heterotetramer upon binding of the ligand. The heterotetramer is composed of an ephrin dimer and a receptor dimer. Oligomerization is probably required to induce biological responses. In terms of processing, phosphorylated. Autophosphorylates upon ligand-binding. Autophosphorylation on Tyr-590 is required for interaction with SH2 domain-containing proteins. As to expression, expressed in the embryo in pre-somitic mesoderm, caudal somites, midbrain, and cement gland. Most abundant in adult brain, eye, heart, lung and ovary. Lower levels in intestine, kidney, oviduct and pharynx.

The protein localises to the cell membrane. It localises to the cell projection. The protein resides in the dendrite. The catalysed reaction is L-tyrosyl-[protein] + ATP = O-phospho-L-tyrosyl-[protein] + ADP + H(+). Functionally, receptor tyrosine kinase which binds promiscuously transmembrane ephrin-B family ligands residing on adjacent cells, leading to contact-dependent bidirectional signaling into neighboring cells. The signaling pathway downstream of the receptor is referred to as forward signaling while the signaling pathway downstream of the ephrin ligand is referred to as reverse signaling. Generally has an overlapping and redundant function with EPHB2. Like EPHB2, functions in axon guidance during development. In addition to its role in axon guidance also plays an important redundant role with other ephrin-B receptors in development and maturation of dendritic spines and the formation of excitatory synapses. May control other aspects of development through regulation of cell migration and positioning. This is Ephrin type-B receptor 3 (ephb3) from Xenopus laevis (African clawed frog).